The sequence spans 263 residues: HTH-type transcriptional repressor NanR (263 aa).

The tract at residues 1–25 (MDVMNAFDSQAEDSPTSLGRSLRRR) is disordered. The HTH gntR-type domain maps to 30–98 (KKLSEMVEEE…NGERARVSRP (69 aa)). Residues 58 to 77 (ERELMAFFNVGRPSVREALA) constitute a DNA-binding region (H-T-H motif).

This sequence belongs to the NanR family.

In terms of biological role, transcriptional repressor that controls expression of the genes required for the catabolism of sialic acids. The chain is HTH-type transcriptional repressor NanR from Salmonella choleraesuis (strain SC-B67).